Here is a 120-residue protein sequence, read N- to C-terminus: Large ribosomal subunit protein uL18 (120 aa).

The interval 1–23 is disordered; the sequence is MKLSRKESVRRRHQRVRRKINGT. The segment covering 8 to 20 has biased composition (basic residues); the sequence is SVRRRHQRVRRKI.

It belongs to the universal ribosomal protein uL18 family. As to quaternary structure, part of the 50S ribosomal subunit; part of the 5S rRNA/L5/L18/L25 subcomplex. Contacts the 5S and 23S rRNAs.

Its function is as follows. This is one of the proteins that bind and probably mediate the attachment of the 5S RNA into the large ribosomal subunit, where it forms part of the central protuberance. The chain is Large ribosomal subunit protein uL18 from Microcystis aeruginosa (strain NIES-843 / IAM M-2473).